The following is a 729-amino-acid chain: MDAKTNDGKAGQCPFTSGRGHKNRDWWPEQLDVQVLHQKSNLSNPMGRDFDYASAFASLDLNAVIADLKALMTDSQDWWPADFGHYGGLMVRMAWHSAGTYRITDGRGGAGGGQQRFAPLNSWPDNVLLDRARRLLWPIKQKYGRKISWADLYVLAGNAALESMGFKPLGFAGGRVDEWEPQELFWGPEGAWLGDERYSGERELAEPLAAVQMGLIYVNPEGPNGQPDPLAAAKDIRETFLRMAMNDEETVALIAGGHTFGKTHGAGDASLVGPVPDSAPIEDQGLGWKGRFGTGKGADAIGSGLEVTWTQTPTKWDNNFFDTLFGFEWELTKSPAGAHQWRAKDAPAITPDPFDESKKHVPTMLTTDLSLRFDPIYGEISKRFHENPDQFADAFARAWFKLTHRDMGPRDRYLGPLVPKEVMIWQDPIPAVDHELVDDNDIADLKAKILASGCTVAQLVSTAWASASTFRGSDKRGGANGARIRLAPQKDWEVNQPIQLKAVLAKLEEIQAEFNDAQTGGKKVSLADLIVLGGSAAVEKAARDAGIDLKVPFTPGRMDASLDQTDVESFAPLEPRADGFRNYISDRHQFMAPEEALVDRAQLLNLTGPEMTVLVGGLRVLGANAADSRHGVFTTRPGKLTNDFFVNLLTMDTEWQPVAGQDGVYESRDRKTGTLKWTGTRVDLIFGSHSQLRAFAEVYACADSGEKFANDFAAAWAKVMNADRFDLKA.

The disordered stretch occupies residues 1–24 (MDAKTNDGKAGQCPFTSGRGHKNR). The tryptophyl-tyrosyl-methioninium (Trp-Tyr) (with M-243) cross-link spans 95 to 217 (WHSAGTYRIT…LAAVQMGLIY (123 aa)). Catalysis depends on His96, which acts as the Proton acceptor. Positions 217-243 (YVNPEGPNGQPDPLAAAKDIRETFLRM) form a cross-link, tryptophyl-tyrosyl-methioninium (Tyr-Met) (with W-95). His258 serves as a coordination point for heme b.

It belongs to the peroxidase family. Peroxidase/catalase subfamily. In terms of assembly, homodimer or homotetramer. Heme b is required as a cofactor. Post-translationally, formation of the three residue Trp-Tyr-Met cross-link is important for the catalase, but not the peroxidase activity of the enzyme.

The catalysed reaction is H2O2 + AH2 = A + 2 H2O. It catalyses the reaction 2 H2O2 = O2 + 2 H2O. In terms of biological role, bifunctional enzyme with both catalase and broad-spectrum peroxidase activity. This Nitrobacter winogradskyi (strain ATCC 25391 / DSM 10237 / CIP 104748 / NCIMB 11846 / Nb-255) protein is Catalase-peroxidase.